Consider the following 350-residue polypeptide: Probable galactose-1-phosphate uridylyltransferase (350 aa).

A disordered region spans residues 31–52; it reads PWSGQQEKAQKNELPEFDPTNP. Residue cysteine 54 participates in Zn(2+) binding. UDP-alpha-D-glucose contacts are provided by residues 76–77 and asparagine 152; that span reads ND. Residue histidine 163 coordinates Zn(2+). The active-site Tele-UMP-histidine intermediate is the histidine 165. Residues glutamine 167, 314–317, and 319–320 contribute to the UDP-alpha-D-glucose site; these read KFMV and FE.

It belongs to the galactose-1-phosphate uridylyltransferase type 1 family. In terms of assembly, homodimer. Requires Zn(2+) as cofactor.

The catalysed reaction is alpha-D-galactose 1-phosphate + UDP-alpha-D-glucose = alpha-D-glucose 1-phosphate + UDP-alpha-D-galactose. Its pathway is carbohydrate metabolism; galactose metabolism. This chain is Probable galactose-1-phosphate uridylyltransferase (Galt), found in Drosophila melanogaster (Fruit fly).